The sequence spans 284 residues: RNase adapter protein RapZ (284 aa).

8–15 provides a ligand contact to ATP; that stretch reads GRSGSGKS. 56–59 is a GTP binding site; that stretch reads DVRN. The interval 266-284 is RNA-binding; the sequence is RSRGKNVQSRHRTLEKRKT.

It belongs to the RapZ-like family. RapZ subfamily. As to quaternary structure, homotrimer.

Its function is as follows. Modulates the synthesis of GlmS, by affecting the processing and stability of the regulatory small RNA GlmZ. When glucosamine-6-phosphate (GlcN6P) concentrations are high in the cell, RapZ binds GlmZ and targets it to cleavage by RNase E. Consequently, GlmZ is inactivated and unable to activate GlmS synthesis. Under low GlcN6P concentrations, RapZ is sequestered and inactivated by an other regulatory small RNA, GlmY, preventing GlmZ degradation and leading to synthesis of GlmS. The polypeptide is RNase adapter protein RapZ (Salmonella arizonae (strain ATCC BAA-731 / CDC346-86 / RSK2980)).